The primary structure comprises 177 residues: F(420)H(2) dehydrogenase subunit I (177 aa).

Residues 1-21 (MGCPEVQDRPGSGYELEETPA) form a disordered region. 4Fe-4S ferredoxin-type domains follow at residues 76–105 (GLQT…IVKA) and 116–145 (WFPQ…SGKE). Cys-85, Cys-88, Cys-91, Cys-95, Cys-125, Cys-128, Cys-131, and Cys-135 together coordinate [4Fe-4S] cluster.

It belongs to the complex I 23 kDa subunit family. As to quaternary structure, the FPO complex is composed of at least 13 different subunits. The cofactor is [4Fe-4S] cluster.

The enzyme catalyses methanophenazine + reduced coenzyme F420-(gamma-L-Glu)(n) = dihydromethanophenazine + oxidized coenzyme F420-(gamma-L-Glu)(n) + H(+). Its function is as follows. Component of the F(420)H(2) dehydrogenase (FPO complex) which is part of the energy-conserving F(420)H(2):heterodisulfide oxidoreductase system. The membrane-bound electron transfer system of the complex plays an important role in the metabolism of methylotrophic methanogens when the organisms grow on methanol or methylamines. Catalyzes the oxidation of methanophenazine to dihydromethanophenazine. It shuttles electrons from F(420)H(2), via FAD and iron-sulfur (Fe-S) centers, to methanophenazine (an electron carrier in the membrane). It couples the redox reaction to proton translocation (for every two electrons transferred, two hydrogen ions are translocated across the cytoplasmic membrane), and thus conserves the redox energy in a proton gradient. It also catalyzes the oxidation of F(420)H(2) with quinones such as 2,3-dimethyl-1,4-naphthoquinone, 2-methyl-1,4-naphthoquinone and tetramethyl-p-benzoquinone. This is F(420)H(2) dehydrogenase subunit I (fpoI) from Methanosarcina mazei (strain ATCC BAA-159 / DSM 3647 / Goe1 / Go1 / JCM 11833 / OCM 88) (Methanosarcina frisia).